The primary structure comprises 415 residues: Maintenance of mitochondrial morphology protein 1 (415 aa).

At 1–18 (MADICPSRSEPTLSFTQG) the chain is on the lumenal side. Residues 19–39 (LILGQLSVVLLLAAFIKFFIF) form a helical membrane-spanning segment. Residues 40 to 415 (GDPPSPEVVA…MPGSMPGSMP (376 aa)) are Cytoplasmic-facing. The SMP-LTD domain maps to 114-330 (QPESLDWFNV…EPRFQEIALP (217 aa)). The span at 373–389 (IEAEAHGGADRVPDSLR) shows a compositional bias: basic and acidic residues. The interval 373 to 415 (IEAEAHGGADRVPDSLRYRHRPRADEEFPGAGSMPGSMPGSMP) is disordered. Over residues 404-415 (GSMPGSMPGSMP) the composition is skewed to low complexity.

Belongs to the MMM1 family. In terms of assembly, homodimer. Component of the ER-mitochondria encounter structure (ERMES) or MDM complex, composed of mmm-1, mdm10, mdm12 and mdm34. A mmm-1 homodimer associates with one molecule of mdm12 on each side in a pairwise head-to-tail manner, and the SMP-LTD domains of mmm-1 and mdm12 generate a continuous hydrophobic tunnel for phospholipid trafficking.

It is found in the endoplasmic reticulum membrane. Functionally, component of the ERMES/MDM complex, which serves as a molecular tether to connect the endoplasmic reticulum (ER) and mitochondria. Components of this complex are involved in the control of mitochondrial shape and protein biogenesis, and function in nonvesicular lipid trafficking between the ER and mitochondria. The mdm12-mmm-1 subcomplex functions in the major beta-barrel assembly pathway that is responsible for biogenesis of all outer membrane beta-barrel proteins, and acts in a late step after the SAM complex. The mdm10-mdm12-mmm-1 subcomplex further acts in the TOM40-specific pathway after the action of the mdm12-mmm-1 complex. Essential for establishing and maintaining the structure of mitochondria and maintenance of mtDNA nucleoids. This Neurospora crassa (strain ATCC 24698 / 74-OR23-1A / CBS 708.71 / DSM 1257 / FGSC 987) protein is Maintenance of mitochondrial morphology protein 1 (mmm-1).